The sequence spans 442 residues: HTH-type transcriptional regulator NorG (442 aa).

In terms of domain architecture, HTH gntR-type spans 2 to 46 (KIPSQRQLAIQYNVNRVTIIKSIELLEAEGFIYTKVGSGTYVNDY). The H-T-H motif DNA-binding region spans 6–25 (QRQLAIQYNVNRVTIIKSIE). Residue lysine 288 is modified to N6-(pyridoxal phosphate)lysine.

In the C-terminal section; belongs to the class-I pyridoxal-phosphate-dependent aminotransferase family. Pyridoxal 5'-phosphate is required as a cofactor.

Its function is as follows. Positively regulates the expression of the NorB efflux pump and negatively regulates the expression of the AbcA efflux pump. Binds specifically to the promoters of norA, norB and norC and abcA genes. Could also have an aminotransferase activity. This chain is HTH-type transcriptional regulator NorG (norG), found in Staphylococcus aureus (strain bovine RF122 / ET3-1).